A 1151-amino-acid polypeptide reads, in one-letter code: Protein BREAST CANCER SUSCEPTIBILITY 2 homolog A (1151 aa).

4 BRCA2 repeats span residues 63 to 97 (MPGEIPMFRTGLGKSVVLKESSIAKAKSILAEKVT), 116 to 150 (TAETLPMFRTASGKSVPLKESSIAKAMSILGSDKI), 163 to 197 (FGVSNSLFQTASNKKVNVSSAGLARAKALLGLEED), and 257 to 291 (LKVPPTKFQTAGGKSLSVSAEALKRARNLLGDPEL). The segment at 408 to 427 (GFIPRGRQPGRPADQPLVDI) is disordered.

In terms of assembly, interacts with RAD51 and DMC1. Interacts with DSS1(I). In terms of tissue distribution, expressed in flower buds.

In terms of biological role, involved in double-strand break repair and/or homologous recombination by mediating RAD51- and DMC1-facilitated DNA repair. Plays an essential role in both somatic and meiotic homologous recombination. Is crucial for the formation of RAD51 and DMC1 foci during male meiotic homologous recombination in prophase I. This is Protein BREAST CANCER SUSCEPTIBILITY 2 homolog A from Arabidopsis thaliana (Mouse-ear cress).